The following is a 366-amino-acid chain: Methylthioribose-1-phosphate isomerase (366 aa).

Asp-260 functions as the Proton donor in the catalytic mechanism.

This sequence belongs to the eIF-2B alpha/beta/delta subunits family. MtnA subfamily.

It is found in the cytoplasm. The protein localises to the nucleus. It carries out the reaction 5-(methylsulfanyl)-alpha-D-ribose 1-phosphate = 5-(methylsulfanyl)-D-ribulose 1-phosphate. Its pathway is amino-acid biosynthesis; L-methionine biosynthesis via salvage pathway; L-methionine from S-methyl-5-thio-alpha-D-ribose 1-phosphate: step 1/6. Its function is as follows. Catalyzes the interconversion of methylthioribose-1-phosphate (MTR-1-P) into methylthioribulose-1-phosphate (MTRu-1-P). This chain is Methylthioribose-1-phosphate isomerase, found in Caenorhabditis elegans.